The primary structure comprises 424 residues: Glutamyl-tRNA reductase (424 aa).

Substrate is bound by residues 49-52, Ser-109, 114-116, and Gln-120; these read TCNR and EDQ. Catalysis depends on Cys-50, which acts as the Nucleophile. 189-194 provides a ligand contact to NADP(+); it reads GFGKMS.

This sequence belongs to the glutamyl-tRNA reductase family. As to quaternary structure, homodimer.

It carries out the reaction (S)-4-amino-5-oxopentanoate + tRNA(Glu) + NADP(+) = L-glutamyl-tRNA(Glu) + NADPH + H(+). Its pathway is porphyrin-containing compound metabolism; protoporphyrin-IX biosynthesis; 5-aminolevulinate from L-glutamyl-tRNA(Glu): step 1/2. Its function is as follows. Catalyzes the NADPH-dependent reduction of glutamyl-tRNA(Glu) to glutamate 1-semialdehyde (GSA). The chain is Glutamyl-tRNA reductase from Alkaliphilus metalliredigens (strain QYMF).